Here is a 220-residue protein sequence, read N- to C-terminus: Large ribosomal subunit protein bL25 (220 aa).

Residues 186-199 show a composition bias toward acidic residues; that stretch reads ELEDEDEDEDEVAA. The interval 186–220 is disordered; it reads ELEDEDEDEDEVAADEVPATEVDDQAAVKEGEGKE. Residues 211-220 show a composition bias toward basic and acidic residues; that stretch reads AAVKEGEGKE.

This sequence belongs to the bacterial ribosomal protein bL25 family. CTC subfamily. As to quaternary structure, part of the 50S ribosomal subunit; part of the 5S rRNA/L5/L18/L25 subcomplex. Contacts the 5S rRNA. Binds to the 5S rRNA independently of L5 and L18.

This is one of the proteins that binds to the 5S RNA in the ribosome where it forms part of the central protuberance. In Christiangramia forsetii (strain DSM 17595 / CGMCC 1.15422 / KT0803) (Gramella forsetii), this protein is Large ribosomal subunit protein bL25.